Reading from the N-terminus, the 77-residue chain is Liver-expressed antimicrobial peptide 2 (77 aa).

Residues 1-22 (MWHLKLFAVLMICLLLLAQVDG) form the signal peptide. Residues 23–37 (SPIPQQSSAKRRPRR) constitute a propeptide that is removed on maturation. Disulfide bonds link cysteine 54/cysteine 65 and cysteine 60/cysteine 70.

It belongs to the LEAP2 family.

It is found in the secreted. Has an antimicrobial activity. This is Liver-expressed antimicrobial peptide 2 (LEAP2) from Bos taurus (Bovine).